A 186-amino-acid polypeptide reads, in one-letter code: Ribosome-recycling factor (186 aa).

Belongs to the RRF family.

It is found in the cytoplasm. In terms of biological role, responsible for the release of ribosomes from messenger RNA at the termination of protein biosynthesis. May increase the efficiency of translation by recycling ribosomes from one round of translation to another. In Polynucleobacter asymbioticus (strain DSM 18221 / CIP 109841 / QLW-P1DMWA-1) (Polynucleobacter necessarius subsp. asymbioticus), this protein is Ribosome-recycling factor.